The chain runs to 145 residues: Large ribosomal subunit protein bL17 (145 aa).

It belongs to the bacterial ribosomal protein bL17 family. As to quaternary structure, part of the 50S ribosomal subunit. Contacts protein L32.

This is Large ribosomal subunit protein bL17 from Francisella tularensis subsp. holarctica (strain FTNF002-00 / FTA).